The primary structure comprises 161 residues: Nucleotide-binding protein Pfl01_4421 (161 aa).

This sequence belongs to the YajQ family.

Nucleotide-binding protein. This Pseudomonas fluorescens (strain Pf0-1) protein is Nucleotide-binding protein Pfl01_4421.